The sequence spans 603 residues: Adenine deaminase (603 aa).

This sequence belongs to the metallo-dependent hydrolases superfamily. Adenine deaminase family. Homodimer. Requires Mn(2+) as cofactor.

It catalyses the reaction adenine + H2O + H(+) = hypoxanthine + NH4(+). The protein is Adenine deaminase of Klebsiella pneumoniae subsp. pneumoniae (strain ATCC 700721 / MGH 78578).